Here is a 296-residue protein sequence, read N- to C-terminus: (3R)-3-[(carboxymethyl)amino]fatty acid oxygenase/decarboxylase (296 aa).

Tyrosine 66, tyrosine 71, and glycine 98 together coordinate (3R)-3-[(carboxymethyl)amino]butanoate. (3R)-3-{[carboxy(hydroxy)methyl]amino}butanoate contacts are provided by tyrosine 66, tyrosine 71, and glycine 98. 2 residues coordinate Fe(2+): histidine 102 and aspartate 104. Positions 105 and 163 each coordinate (3R)-3-[(carboxymethyl)amino]butanoate. Positions 105 and 163 each coordinate (3R)-3-{[carboxy(hydroxy)methyl]amino}butanoate. Fe(2+) is bound at residue histidine 265. Histidine 269 contacts 2-oxoglutarate. Arginine 280 contacts (3R)-3-[(carboxymethyl)amino]butanoate. A (3R)-3-{[carboxy(hydroxy)methyl]amino}butanoate-binding site is contributed by arginine 280.

Belongs to the TfdA dioxygenase family. The cofactor is Fe(2+).

The catalysed reaction is a (3R)-3-[(carboxymethyl)amino]fatty acid + 2 2-oxoglutarate + 2 O2 = a (3R)-3-isocyanyl-fatty acid + 2 succinate + 3 CO2 + 2 H2O. It catalyses the reaction a (3R)-3-[(carboxymethyl)amino]fatty acid + 2-oxoglutarate + O2 = a (3R)-3-{[carboxy(hydroxy)methyl]amino}fatty acid + succinate + CO2. It carries out the reaction a (3R)-3-{[carboxy(hydroxy)methyl]amino}fatty acid + 2-oxoglutarate + O2 = a (3R)-3-isocyanyl-fatty acid + succinate + 2 CO2 + 2 H2O. The enzyme catalyses (3R)-3-[(carboxymethyl)amino]butanoate + 2 2-oxoglutarate + 2 O2 = (3R)-3-isocyanylbutanoate + 2 succinate + 3 CO2 + 2 H2O. The catalysed reaction is (3R)-3-[(carboxymethyl)amino]butanoate + 2-oxoglutarate + O2 = (3R)-3-{[carboxy(hydroxy)methyl]amino}butanoate + succinate + CO2. It catalyses the reaction (3R)-3-{[carboxy(hydroxy)methyl]amino}butanoate + 2-oxoglutarate + O2 = (3R)-3-isocyanylbutanoate + succinate + 2 CO2 + 2 H2O. Involved in the biosynthesis of a unique class of isonitrile lipopeptides (INLPs). Catalyzes the conversion of (3R)-3-[(carboxymethyl)amino]fatty acids such as (3R)-3-[(carboxymethyl)amino]butanoate (CABA) to (3R)-3-isocyanylbutanoate (INBA) through an oxidative decarboxylation mechanism, thereby generating the isonitrile group of INLPs. This is (3R)-3-[(carboxymethyl)amino]fatty acid oxygenase/decarboxylase from Streptomyces coeruleorubidus.